The primary structure comprises 213 residues: Phospho-2-dehydro-3-deoxyheptonate aldolase, Tyr-sensitive (213 aa).

It belongs to the class-I DAHP synthase family.

It catalyses the reaction D-erythrose 4-phosphate + phosphoenolpyruvate + H2O = 7-phospho-2-dehydro-3-deoxy-D-arabino-heptonate + phosphate. Its pathway is metabolic intermediate biosynthesis; chorismate biosynthesis; chorismate from D-erythrose 4-phosphate and phosphoenolpyruvate: step 1/7. In terms of biological role, stereospecific condensation of phosphoenolpyruvate (PEP) and D-erythrose-4-phosphate (E4P) giving rise to 3-deoxy-D-arabino-heptulosonate-7-phosphate (DAHP). This Enterobacter agglomerans (Erwinia herbicola) protein is Phospho-2-dehydro-3-deoxyheptonate aldolase, Tyr-sensitive (aroF).